We begin with the raw amino-acid sequence, 102 residues long: NADH-quinone oxidoreductase subunit K (102 aa).

3 helical membrane passes run 5–25 (IAHY…GIFL), 31–51 (IIIL…FIAF), and 66–86 (FVLT…VVFF).

This sequence belongs to the complex I subunit 4L family. NDH-1 is composed of 14 different subunits. Subunits NuoA, H, J, K, L, M, N constitute the membrane sector of the complex.

The protein localises to the cell inner membrane. It catalyses the reaction a quinone + NADH + 5 H(+)(in) = a quinol + NAD(+) + 4 H(+)(out). Functionally, NDH-1 shuttles electrons from NADH, via FMN and iron-sulfur (Fe-S) centers, to quinones in the respiratory chain. The immediate electron acceptor for the enzyme in this species is believed to be ubiquinone. Couples the redox reaction to proton translocation (for every two electrons transferred, four hydrogen ions are translocated across the cytoplasmic membrane), and thus conserves the redox energy in a proton gradient. The sequence is that of NADH-quinone oxidoreductase subunit K from Chelativorans sp. (strain BNC1).